Consider the following 432-residue polypeptide: NADH-quinone oxidoreductase subunit D (432 aa).

This sequence belongs to the complex I 49 kDa subunit family. NDH-1 is composed of 14 different subunits. Subunits NuoB, C, D, E, F, and G constitute the peripheral sector of the complex.

The protein localises to the cell membrane. It carries out the reaction a quinone + NADH + 5 H(+)(in) = a quinol + NAD(+) + 4 H(+)(out). NDH-1 shuttles electrons from NADH, via FMN and iron-sulfur (Fe-S) centers, to quinones in the respiratory chain. The immediate electron acceptor for the enzyme in this species is believed to be a menaquinone. Couples the redox reaction to proton translocation (for every two electrons transferred, four hydrogen ions are translocated across the cytoplasmic membrane), and thus conserves the redox energy in a proton gradient. The protein is NADH-quinone oxidoreductase subunit D of Mycobacteroides abscessus (strain ATCC 19977 / DSM 44196 / CCUG 20993 / CIP 104536 / JCM 13569 / NCTC 13031 / TMC 1543 / L948) (Mycobacterium abscessus).